The primary structure comprises 223 residues: Alpha-enolase (223 aa).

Mg(2+) is bound at residue Ser8. At Tyr12 the chain carries Phosphotyrosine. Lys25 is modified (N6-acetyllysine). Residue Glu39 coordinates substrate. Lys61 is modified (N6-acetyllysine). Catalysis depends on Glu69, which acts as the Proton donor. An N6-acetyllysine; alternate modification is found at Lys87. Residue Lys87 is modified to N6-malonyllysine; alternate. N6-succinyllysine; alternate is present on Lys87. The Mg(2+) site is built by Asp99 and Asp119. Asp119 provides a ligand contact to substrate. N6-acetyllysine is present on residues Lys133 and Lys141. The active-site Proton acceptor is the Lys141. Residues 168–171 (SHRS) and Lys192 each bind substrate. The segment at 202–223 (YNQILRIEEELGSKSFRNPLAK) is required for interaction with PLG. Position 215 is an N6-acetyllysine; alternate (Lys215). Lys215 is modified (N6-malonyllysine; alternate). An N6-succinyllysine; alternate modification is found at Lys215.

The protein belongs to the enolase family. Mammalian enolase is composed of 3 isozyme subunits, alpha, beta and gamma, which can form homodimers or heterodimers which are cell-type and development-specific. ENO1 interacts with PLG in the neuronal plasma membrane and promotes its activation. The C-terminal lysine is required for this binding. Interacts with ENO4 and PGAM2. Interacts with CMTM6. Mg(2+) is required as a cofactor. ISGylated. Post-translationally, lysine 2-hydroxyisobutyrylation (Khib) by p300/EP300 activates the phosphopyruvate hydratase activity.

It localises to the cytoplasm. The protein resides in the cell membrane. It carries out the reaction (2R)-2-phosphoglycerate = phosphoenolpyruvate + H2O. It participates in carbohydrate degradation; glycolysis; pyruvate from D-glyceraldehyde 3-phosphate: step 4/5. Functionally, glycolytic enzyme the catalyzes the conversion of 2-phosphoglycerate to phosphoenolpyruvate. In addition to glycolysis, involved in various processes such as growth control, hypoxia tolerance and allergic responses. May also function in the intravascular and pericellular fibrinolytic system due to its ability to serve as a receptor and activator of plasminogen on the cell surface of several cell-types such as leukocytes and neurons. Stimulates immunoglobulin production. The protein is Alpha-enolase of Mesocricetus auratus (Golden hamster).